The sequence spans 321 residues: Putative ribose-phosphate pyrophosphokinase 2 (321 aa).

ATP contacts are provided by residues 41–43 (DGE) and 100–101 (RQ). Histidine 134 contacts Mg(2+). D-ribose 5-phosphate-binding positions include aspartate 223 and 227–231 (NTGVT).

Belongs to the ribose-phosphate pyrophosphokinase family. Class I subfamily. In terms of assembly, homohexamer. Mg(2+) is required as a cofactor.

Its subcellular location is the cytoplasm. The catalysed reaction is D-ribose 5-phosphate + ATP = 5-phospho-alpha-D-ribose 1-diphosphate + AMP + H(+). Its pathway is metabolic intermediate biosynthesis; 5-phospho-alpha-D-ribose 1-diphosphate biosynthesis; 5-phospho-alpha-D-ribose 1-diphosphate from D-ribose 5-phosphate (route I): step 1/1. Its function is as follows. Involved in the biosynthesis of the central metabolite phospho-alpha-D-ribosyl-1-pyrophosphate (PRPP) via the transfer of pyrophosphoryl group from ATP to 1-hydroxyl of ribose-5-phosphate (Rib-5-P). The protein is Putative ribose-phosphate pyrophosphokinase 2 of Lactococcus lactis subsp. lactis (strain IL1403) (Streptococcus lactis).